The primary structure comprises 183 residues: MQKQVVVMDEAAIKRALTRVSYEIIERNKGTKNLALVGIKTRGIYLAERLHKRILEIEGIDVPVGDIDITLYRDDLSFKDDKTREPAVHGTNIPFDINGKKVVLVDDVLYTGRTVRAAMDALMDVGRPAQIHLAVLADRGHRELPIRADYVGKNIPTSGNERVEVRLTDVDNEEDAVIINKNE.

A PRPP-binding motif is present at residues 102–114 (VVLVDDVLYTGRT).

This sequence belongs to the purine/pyrimidine phosphoribosyltransferase family. PyrR subfamily. As to quaternary structure, homodimer and homohexamer; in equilibrium.

The catalysed reaction is UMP + diphosphate = 5-phospho-alpha-D-ribose 1-diphosphate + uracil. Its function is as follows. Regulates transcriptional attenuation of the pyrimidine nucleotide (pyr) operon by binding in a uridine-dependent manner to specific sites on pyr mRNA. This disrupts an antiterminator hairpin in the RNA and favors formation of a downstream transcription terminator, leading to a reduced expression of downstream genes. Functionally, also displays a weak uracil phosphoribosyltransferase activity which is not physiologically significant. This Listeria monocytogenes serotype 4b (strain CLIP80459) protein is Bifunctional protein PyrR.